A 235-amino-acid polypeptide reads, in one-letter code: Glucosamine-6-phosphate deaminase (235 aa).

Asp-62 acts as the Proton acceptor; for enolization step in catalysis. The active-site For ring-opening step is Asn-128. His-130 functions as the Proton acceptor; for ring-opening step in the catalytic mechanism. The active-site For ring-opening step is the Glu-135.

Belongs to the glucosamine/galactosamine-6-phosphate isomerase family. NagB subfamily.

The enzyme catalyses alpha-D-glucosamine 6-phosphate + H2O = beta-D-fructose 6-phosphate + NH4(+). It functions in the pathway amino-sugar metabolism; N-acetylneuraminate degradation; D-fructose 6-phosphate from N-acetylneuraminate: step 5/5. In terms of biological role, catalyzes the reversible isomerization-deamination of glucosamine 6-phosphate (GlcN6P) to form fructose 6-phosphate (Fru6P) and ammonium ion. This is Glucosamine-6-phosphate deaminase from Lactococcus lactis subsp. lactis (strain IL1403) (Streptococcus lactis).